Consider the following 209-residue polypeptide: Mitochondrial import inner membrane translocase subunit Tim23 (209 aa).

3 consecutive transmembrane segments (helical) span residues 73–93 (FELA…FGAL), 125–145 (ALWA…GVII), and 181–197 (GLAG…YNNW).

The protein belongs to the Tim17/Tim22/Tim23 family. In terms of assembly, component of the TIM23 complex at least composed of TIMM23, TIMM17 (TIMM17A or TIMM17B) and TIMM50; within this complex, directly interacts with TIMM50. The complex interacts with the TIMM44 component of the PAM complex and with DNAJC15. Upon mitochondrial depolarization, interacts with PINK1; the interaction is required for PINK1 accumulation at the outer mitochondrial membrane, kinase activation by autophosphorylation and PRKN recruitement to mitochondria.

The protein resides in the mitochondrion inner membrane. Functionally, essential component of the TIM23 complex, a complex that mediates the translocation of transit peptide-containing proteins across the mitochondrial inner membrane. Has a role in the activation of stress-induced mitophagy by protecting PINK1 from OMA1-mediated degradation and facilitating its accumulation at the outer mitochondrial membrane in response to depolarization. This Rattus norvegicus (Rat) protein is Mitochondrial import inner membrane translocase subunit Tim23 (Timm23).